The sequence spans 206 residues: MNAVPDGRSDKPRSVVGVLALQGDTREHLAALTEAGAEAVTVRRLRELEAVDALVIPGGESTAMSHLLREFELLEPLRARLAEGMPAYGSCAGMILLATEILDAGAAGREATPLKGIDMSVRRNAFGRQVDSFEGDIPFVGLDSPVHAVFIRAPWVERIGDGVEVLARADGHIVAVRQGRMLATAFHPEVTGDRRVHKLFVDMVSE.

59-61 (GES) lines the L-glutamine pocket. The Nucleophile role is filled by C91. L-glutamine contacts are provided by residues R123 and 151–152 (IR). Residues H187 and E189 each act as charge relay system in the active site.

The protein belongs to the glutaminase PdxT/SNO family. In the presence of PdxS, forms a dodecamer of heterodimers. Only shows activity in the heterodimer.

The catalysed reaction is aldehydo-D-ribose 5-phosphate + D-glyceraldehyde 3-phosphate + L-glutamine = pyridoxal 5'-phosphate + L-glutamate + phosphate + 3 H2O + H(+). The enzyme catalyses L-glutamine + H2O = L-glutamate + NH4(+). Its pathway is cofactor biosynthesis; pyridoxal 5'-phosphate biosynthesis. Its function is as follows. Catalyzes the hydrolysis of glutamine to glutamate and ammonia as part of the biosynthesis of pyridoxal 5'-phosphate. The resulting ammonia molecule is channeled to the active site of PdxS. This Mycobacterium sp. (strain KMS) protein is Pyridoxal 5'-phosphate synthase subunit PdxT.